The chain runs to 297 residues: Probable terminal-alkyne amino-acid exporter (297 aa).

Transmembrane regions (helical) follow at residues 6–26 (AVWALVLTVVTWASAFPAIRV), 32–52 (GVAGLSLSRLTVASVALAIAA), 65–85 (LPMIALCGATGMSAYQVLLNW), 95–115 (ASLLIAIAPVFSVLLAAVFLG), 123–143 (IAGSAVAISGAAVIAVAGGHA), 150–170 (WVVLAAAVVQGVYHFATKPLL), 178–198 (VACYAMWAGTVFLLPLLPAMV), 212–232 (TVYLGLLPSAIGFVSWGYAVA), and 249–269 (VALVVAFVWLGEVPPPLALVG). 2 consecutive EamA domains span residues 6–137 (AVWA…AVIA) and 150–281 (WVVL…MLIN).

It belongs to the EamA transporter family.

Its subcellular location is the cell membrane. Probably involved in the export of terminal alkyne-containing amino acids, namely L-propargylglycine (Pra) and L-beta-ethynylserine, that are antibiotics synthesized by enzymes encoded in the same gene cluster. This chain is Probable terminal-alkyne amino-acid exporter, found in Streptantibioticus cattleyicolor (strain ATCC 35852 / DSM 46488 / JCM 4925 / NBRC 14057 / NRRL 8057) (Streptomyces cattleya).